A 217-amino-acid chain; its full sequence is Proteasome subunit beta type-9 (217 aa).

The propeptide at 1–18 (MLEESSEPGWLSEEVKTG) is removed in mature form. The active-site Nucleophile is the threonine 19.

Belongs to the peptidase T1B family. In terms of assembly, the 26S proteasome consists of a 20S proteasome core and two 19S regulatory subunits. The 20S proteasome core is composed of 28 subunits that are arranged in four stacked rings, resulting in a barrel-shaped structure. The two end rings are each formed by seven alpha subunits, and the two central rings are each formed by seven beta subunits. The catalytic chamber with the active sites is on the inside of the barrel. Component of the immunoproteasome, where it displaces the equivalent housekeeping subunit PSMB6. In terms of processing, autocleaved. The resulting N-terminal Thr residue of the mature subunit is responsible for the nucleophile proteolytic activity.

The protein localises to the cytoplasm. Its subcellular location is the nucleus. The catalysed reaction is Cleavage of peptide bonds with very broad specificity.. In terms of biological role, the proteasome is a multicatalytic proteinase complex which is characterized by its ability to cleave peptides with Arg, Phe, Tyr, Leu, and Glu adjacent to the leaving group at neutral or slightly basic pH. The proteasome has an ATP-dependent proteolytic activity. This subunit is involved in antigen processing to generate class I binding peptides. This chain is Proteasome subunit beta type-9 (psmb9-a), found in Salmo salar (Atlantic salmon).